The chain runs to 231 residues: Ureidoacrylate amidohydrolase RutB (231 aa).

D25 serves as the catalytic Proton acceptor. K134 is an active-site residue. C167 functions as the Nucleophile in the catalytic mechanism.

This sequence belongs to the isochorismatase family. RutB subfamily.

It carries out the reaction (Z)-3-ureidoacrylate + H2O + H(+) = (Z)-3-aminoacrylate + NH4(+) + CO2. The enzyme catalyses (Z)-3-ureidoacrylate + H2O = (Z)-3-aminoacrylate + carbamate + H(+). The catalysed reaction is (Z)-2-methylureidoacrylate + H2O + H(+) = (Z)-2-methylaminoacrylate + NH4(+) + CO2. In terms of biological role, hydrolyzes ureidoacrylate to form aminoacrylate and carbamate. The carbamate hydrolyzes spontaneously, thereby releasing one of the nitrogen atoms of the pyrimidine ring as ammonia and one of its carbon atoms as CO2. The sequence is that of Ureidoacrylate amidohydrolase RutB from Escherichia coli (strain SMS-3-5 / SECEC).